We begin with the raw amino-acid sequence, 1030 residues long: Toll-like receptor 9 (1030 aa).

The signal sequence occupies residues 1-24; that stretch reads MGPRCTLHPLSLLVQVTALAAALA. Over 25-816 the chain is Extracellular; it reads QGRLPAFLPC…LCLDETLSWN (792 aa). A disulfide bridge connects residues Cys34 and Cys44. Position 46-50 (46-50) interacts with DNA; the sequence is WLFLK. 26 LRR repeats span residues 61 to 84, 86 to 109, 121 to 146, 149 to 165, 166 to 189, 197 to 220, 222 to 241, 242 to 267, 282 to 305, 307 to 331, 332 to 355, 362 to 385, 389 to 412, 414 to 439, 469 to 493, 495 to 518, 519 to 542, 544 to 571, 573 to 597, 599 to 621, 626 to 649, 651 to 674, 675 to 698, 700 to 722, 723 to 746, and 748 to 771; these read RANV…DFVH, SSLR…HFPC, VPTL…SLVS, LSRT…LTGL, HALR…ALEV, LGNL…LPPS, ETLL…DLAN, LTAL…CREC, LSRL…WFRG, DRLQ…AFQG, LARL…HLHL, LRSL…TLQP, LPML…IFGA, PGLL…TREV, CKAF…MFAR, SRLE…QFVP, LTSL…SFTE, PRLE…SFVA, LPAL…LCSA, LCAL…LYLR, LRSL…ALDN, PKSL…SLTL, LPKL…SLPS, TQLR…FFAL, AKQL…WFGS, and VGNL…TFVG. N-linked (GlcNAc...) asparagine glycosylation occurs at Asn63. Residues 71–76 and 94–108 each bind DNA; these read SNRIHH and KWNC…MHFP. Cys97 and Cys109 are joined by a disulfide. Residue Asn128 is glycosylated (N-linked (GlcNAc...) asparagine). Residues Tyr131, Arg151, and 178-180 contribute to the DNA site; that span reads YYK. Residues Cys177 and Cys183 are joined by a disulfide bond. Asn199 carries N-linked (GlcNAc...) asparagine glycosylation. Tyr207 is a binding site for DNA. N-linked (GlcNAc...) asparagine glycosylation is found at Asn209 and Asn241. 2 disulfide bridges follow: Cys254-Cys267 and Cys257-Cys264. A lipid anchor (S-palmitoyl cysteine) is attached at Cys257. Arg261 is a binding site for DNA. The S-palmitoyl cysteine moiety is linked to residue Cys264. Residue Asn339 is glycosylated (N-linked (GlcNAc...) asparagine). Cys469 and Cys499 are disulfide-bonded. Residue Asn512 is glycosylated (N-linked (GlcNAc...) asparagine). Asn566 is a glycosylation site (N-linked (GlcNAc...) asparagine). Asn668 and Asn693 each carry an N-linked (GlcNAc...) asparagine glycan. N-linked (GlcNAc...) asparagine glycosylation is present at Asn730. Cystine bridges form between Cys763-Cys789 and Cys765-Cys808. The chain crosses the membrane as a helical span at residues 817–837; that stretch reads CFGISLLAMALGLVVPMLHHL. Over 838–1030 the chain is Cytoplasmic; the sequence is CGWDLWYCFH…NFCRGPTTAE (193 aa). The region spanning 865–1010 is the TIR domain; the sequence is LFYDAFVVFD…SFWAQLGTAL (146 aa).

The protein belongs to the Toll-like receptor family. Monomer and homodimer. Exists as a monomer in the absence of unmethylated cytidine-phosphate-guanosine (CpG) ligand. Proteolytic processing of an insertion loop (Z-loop) is required for homodimerization upon binding to the unmethylated CpG ligand leading to its activation. Interacts with MYD88 via their respective TIR domains. Interacts with BTK. Interacts (via transmembrane domain) with UNC93B1. Interacts with CD300LH; the interaction may promote full activation of TLR9-triggered innate responses. Interacts with CNPY3 and HSP90B1; this interaction is required for proper folding in the endoplasmic reticulum. Interacts with SMPDL3B. Interacts with CD82; this interaction is essential for TLR9-dependent myddosome formation in response to CpG stimulation. Activated by proteolytic cleavage of the flexible loop between repeats LRR14 and LRR15 within the ectodomain. Cleavage requires UNC93B1. Proteolytically processed by first removing the majority of the ectodomain by either asparagine endopeptidase (AEP) or a cathepsin followed by a trimming event that is solely cathepsin mediated and required for optimal receptor signaling. In terms of processing, palmitoylated by ZDHHC3 in the Golgi regulates TLR9 trafficking from the Golgi to endosomes. Depalmitoylation by PPT1 controls the release of TLR9 from UNC93B1 in endosomes.

It is found in the endoplasmic reticulum membrane. The protein localises to the endosome. It localises to the lysosome. The protein resides in the cytoplasmic vesicle. Its subcellular location is the phagosome. Its function is as follows. Key component of innate and adaptive immunity. TLRs (Toll-like receptors) control host immune response against pathogens through recognition of molecular patterns specific to microorganisms. TLR9 is a nucleotide-sensing TLR which is activated by unmethylated cytidine-phosphate-guanosine (CpG) dinucleotides. Acts via MYD88 and TRAF6, leading to NF-kappa-B activation, cytokine secretion and the inflammatory response. Upon CpG stimulation, induces B-cell proliferation, activation, survival and antibody production. The sequence is that of Toll-like receptor 9 (TLR9) from Sus scrofa (Pig).